The primary structure comprises 270 residues: Protein-ADP-ribose hydrolase (270 aa).

One can recognise a Macro domain in the interval 73–267 (VSVKDCQKTN…LYDTYLQKEN (195 aa)). Asp-92, Ile-93, and Asn-106 together coordinate ADP-D-ribose. Residues Cys-112, His-117, and Cys-119 each contribute to the Zn(2+) site. ADP-D-ribose contacts are provided by Cys-119, Ile-120, Asp-121, Ser-212, Thr-213, Gly-214, Glu-215, and Phe-216.

Belongs to the MacroD-type family. Zn-Macro subfamily. Zn(2+) serves as cofactor.

The catalysed reaction is 4-O-(ADP-D-ribosyl)-L-aspartyl-[protein] + H2O = L-aspartyl-[protein] + ADP-D-ribose + H(+). In terms of biological role, ADP-ribosylhydrolase that specifically reverses the SirTM-mediated mono-ADP-ribosylation at an asparatate residue of GcvH-L, by releasing ADP-ribose from the target protein. May play a role in the regulation of the response to host-induced oxidative stress. In Streptococcus pyogenes serotype M6 (strain ATCC BAA-946 / MGAS10394), this protein is Protein-ADP-ribose hydrolase.